Consider the following 147-residue polypeptide: 3-dehydroquinate dehydratase (147 aa).

Y22 functions as the Proton acceptor in the catalytic mechanism. Residues N76, H82, and D89 each coordinate substrate. The Proton donor role is filled by H102. Residues 103-104 and R113 contribute to the substrate site; that span reads IS.

Belongs to the type-II 3-dehydroquinase family. In terms of assembly, homododecamer.

The enzyme catalyses 3-dehydroquinate = 3-dehydroshikimate + H2O. It functions in the pathway metabolic intermediate biosynthesis; chorismate biosynthesis; chorismate from D-erythrose 4-phosphate and phosphoenolpyruvate: step 3/7. In terms of biological role, catalyzes a trans-dehydration via an enolate intermediate. This is 3-dehydroquinate dehydratase from Fusobacterium nucleatum subsp. nucleatum (strain ATCC 25586 / DSM 15643 / BCRC 10681 / CIP 101130 / JCM 8532 / KCTC 2640 / LMG 13131 / VPI 4355).